We begin with the raw amino-acid sequence, 290 residues long: Ribosomal RNA small subunit methyltransferase A (290 aa).

Residues asparagine 27, leucine 29, glycine 54, glutamate 75, aspartate 100, and asparagine 125 each contribute to the S-adenosyl-L-methionine site.

This sequence belongs to the class I-like SAM-binding methyltransferase superfamily. rRNA adenine N(6)-methyltransferase family. RsmA subfamily.

The protein resides in the cytoplasm. It carries out the reaction adenosine(1518)/adenosine(1519) in 16S rRNA + 4 S-adenosyl-L-methionine = N(6)-dimethyladenosine(1518)/N(6)-dimethyladenosine(1519) in 16S rRNA + 4 S-adenosyl-L-homocysteine + 4 H(+). In terms of biological role, specifically dimethylates two adjacent adenosines (A1518 and A1519) in the loop of a conserved hairpin near the 3'-end of 16S rRNA in the 30S particle. May play a critical role in biogenesis of 30S subunits. This Streptococcus sanguinis (strain SK36) protein is Ribosomal RNA small subunit methyltransferase A.